The following is a 237-amino-acid chain: Phosphoribosylaminoimidazole-succinocarboxamide synthase (237 aa).

Belongs to the SAICAR synthetase family.

The catalysed reaction is 5-amino-1-(5-phospho-D-ribosyl)imidazole-4-carboxylate + L-aspartate + ATP = (2S)-2-[5-amino-1-(5-phospho-beta-D-ribosyl)imidazole-4-carboxamido]succinate + ADP + phosphate + 2 H(+). Its pathway is purine metabolism; IMP biosynthesis via de novo pathway; 5-amino-1-(5-phospho-D-ribosyl)imidazole-4-carboxamide from 5-amino-1-(5-phospho-D-ribosyl)imidazole-4-carboxylate: step 1/2. This chain is Phosphoribosylaminoimidazole-succinocarboxamide synthase, found in Idiomarina loihiensis (strain ATCC BAA-735 / DSM 15497 / L2-TR).